Consider the following 242-residue polypeptide: uncharacterized protein (242 aa).

Residues 1–11 (MNFEAASAPSQ) are compositionally biased toward low complexity. Residues 1–45 (MNFEAASAPSQQPSPTPAPKTEEPKENGGSEQQADQPENSKKDDV) form a disordered region.

This sequence to U.parvum UU171.

This is an uncharacterized protein from Ureaplasma parvum serovar 3 (strain ATCC 700970).